The following is a 250-amino-acid chain: Mediator of RNA polymerase II transcription subunit 8 (250 aa).

The interval 217–250 (SPMSAVSPGAGPLGKMPSGIKTNIKSANQVHPYR) is disordered. Polar residues predominate over residues 236–250 (IKTNIKSANQVHPYR).

This sequence belongs to the Mediator complex subunit 8 family. Component of the Mediator complex.

Its subcellular location is the nucleus. Its function is as follows. Component of the Mediator complex, a coactivator involved in the regulated transcription of nearly all RNA polymerase II-dependent genes. Mediator functions as a bridge to convey information from gene-specific regulatory proteins to the basal RNA polymerase II transcription machinery. Mediator is recruited to promoters by direct interactions with regulatory proteins and serves as a scaffold for the assembly of a functional preinitiation complex with RNA polymerase II and the general transcription factors. This chain is Mediator of RNA polymerase II transcription subunit 8 (MED8), found in Aedes aegypti (Yellowfever mosquito).